The sequence spans 591 residues: Aspartate--tRNA ligase (591 aa).

Glutamate 173 is a binding site for L-aspartate. The segment at glutamine 197–lysine 200 is aspartate. Arginine 219 contributes to the L-aspartate binding site. ATP is bound by residues arginine 219–glutamate 221 and glutamine 228. Histidine 448 is a binding site for L-aspartate. Glutamate 482 contributes to the ATP binding site. Arginine 489 serves as a coordination point for L-aspartate. Glycine 534–arginine 537 contributes to the ATP binding site.

Belongs to the class-II aminoacyl-tRNA synthetase family. Type 1 subfamily. In terms of assembly, homodimer.

The protein resides in the cytoplasm. The catalysed reaction is tRNA(Asp) + L-aspartate + ATP = L-aspartyl-tRNA(Asp) + AMP + diphosphate. In terms of biological role, catalyzes the attachment of L-aspartate to tRNA(Asp) in a two-step reaction: L-aspartate is first activated by ATP to form Asp-AMP and then transferred to the acceptor end of tRNA(Asp). The sequence is that of Aspartate--tRNA ligase from Shewanella sp. (strain ANA-3).